Consider the following 87-residue polypeptide: U9-ctenitoxin-Pn1a (87 aa).

The signal sequence occupies residues 1 to 22 (MWLKTQLFVLAIAVIALLEVHA). Positions 23–37 (EPESNDNNELVVEEA) are excised as a propeptide. 4 disulfides stabilise this stretch: C40-C54, C47-C64, C53-C73, and C66-C71. Positions 75–87 (KSLREMAAAAFGR) are excised as a propeptide.

Belongs to the neurotoxin 02 (plectoxin) family. 01 (Tx3) subfamily. As to expression, expressed by the venom gland.

The protein resides in the secreted. Its function is as follows. Antagonist of L-type calcium channels (Cav1/CACNA1). The protein is U9-ctenitoxin-Pn1a of Phoneutria nigriventer (Brazilian armed spider).